The chain runs to 479 residues: MNILFATSEAFPFIKTGGLGDVSYALPKALKRKGTDIRVILPKYSSIPQEYADNMRKVAEFTVGVGWRSQYCGLLELEKDGVKFYFIDNEYYFKRNSAYAQMDDGERFSFFSRAILESINHISDFTPDVLHCNDWHTAMTIPMLRDQYFNNPKLNNIKTVYTIHNLKYQGRFGKEILWELLGFGDEYFSEDKFKYYDSISFMKAGIVYADAITTVSPTYAEEIKTEYYGEGLNGLLQSRSKDLYGILNGIDTDVNNPSTDMFLFDKYDVNNLEAKARNKEKLQEMLHLPKNRDIPMIGIVARLEEQKGFELIKEVIEELLQENIQLVVLGTGDQRYEDMFKFFAWKYPDKLSANIYFDGGLAQKIYAASDMFLMPSRFEPCGIGQLIALRYGSVPIVRETGGLNDTVFSYNEFTGEGNGFSFTSFNARDMLYTIKRAIGFYYDKDVWSKLVQRGMNGDYSWEKAAEKYMRVYSNILHKW.

K15 provides a ligand contact to ADP-alpha-D-glucose.

This sequence belongs to the glycosyltransferase 1 family. Bacterial/plant glycogen synthase subfamily.

The enzyme catalyses [(1-&gt;4)-alpha-D-glucosyl](n) + ADP-alpha-D-glucose = [(1-&gt;4)-alpha-D-glucosyl](n+1) + ADP + H(+). Its pathway is glycan biosynthesis; glycogen biosynthesis. Synthesizes alpha-1,4-glucan chains using ADP-glucose. The protein is Glycogen synthase of Clostridium novyi (strain NT).